A 302-amino-acid polypeptide reads, in one-letter code: Tyrosine--tRNA ligase 2 (302 aa).

Tyr33 is a binding site for L-tyrosine. The short motif at 38 to 47 (PTADSLHLGH) is the 'HIGH' region element. 2 residues coordinate L-tyrosine: Tyr160 and Gln164. The 'KMSKS' region signature appears at 220-224 (KFGKS). Lys223 contributes to the ATP binding site.

It belongs to the class-I aminoacyl-tRNA synthetase family. TyrS type 1 subfamily. Homodimer.

Its subcellular location is the cytoplasm. It catalyses the reaction tRNA(Tyr) + L-tyrosine + ATP = L-tyrosyl-tRNA(Tyr) + AMP + diphosphate + H(+). In terms of biological role, catalyzes the attachment of tyrosine to tRNA(Tyr) in a two-step reaction: tyrosine is first activated by ATP to form Tyr-AMP and then transferred to the acceptor end of tRNA(Tyr). This chain is Tyrosine--tRNA ligase 2 (tyrS2), found in Streptococcus thermophilus (strain CNRZ 1066).